A 290-amino-acid polypeptide reads, in one-letter code: Serpentine receptor class U-26 (290 aa).

Transmembrane regions (helical) follow at residues 31-51, 70-90, 112-134, 158-178, 185-205, 213-233, and 262-282; these read LPML…IIIL, LLSA…ADFL, FITI…PFLV, FSIP…FPAI, AYPF…FGLV, NTLF…LLLI, and MIFS…LHIV.

It belongs to the nematode receptor-like protein sru family.

It is found in the membrane. The protein is Serpentine receptor class U-26 (sru-26) of Caenorhabditis elegans.